The sequence spans 130 residues: Ribonuclease VapC4 (130 aa).

Positions Leu7–Ile130 constitute a PINc domain. Mg(2+)-binding residues include Asp9 and Asp98.

It belongs to the PINc/VapC protein family. Interacts with cognate antitoxin VapB4. Mg(2+) serves as cofactor.

It localises to the secreted. In terms of biological role, toxic component of a type II toxin-antitoxin (TA) system. Probably exerts its toxic effect by binding to mRNA, inhibiting translation. Binds to, recognizes and cleaves ssRNA at ACGC and AC(A/U)GC sequences, usually between the G and C; cleavage is not very efficient, nor is cleavage required to inhibit protein synthesis. Upon expression in situ, in M.smegmatis or E.coli inhibits cell growth and colony formation; in at least E.coli also causes increased levels of cellular RNA. Its toxic effect is neutralized by coexpression with cognate antitoxin VapB4. The polypeptide is Ribonuclease VapC4 (Mycobacterium tuberculosis (strain ATCC 25618 / H37Rv)).